The sequence spans 243 residues: Vesicle-associated membrane protein-associated protein B (243 aa).

Ala-2 carries the post-translational modification N-acetylalanine. Residues 2-218 (AKVEQVLSLE…AALAATGKEE (217 aa)) are Cytoplasmic-facing. The MSP domain occupies 7–124 (VLSLEPQHEL…MDSKLRCVFE (118 aa)). The residue at position 146 (Ser-146) is a Phosphoserine. Lys-147 is covalently cross-linked (Glycyl lysine isopeptide (Lys-Gly) (interchain with G-Cter in SUMO1)). Residues Ser-156 and Ser-159 each carry the phosphoserine modification. Residues 161–196 (LDDTEVKKVMEECRRLQGEVQRLREESRQLKEEDGL) adopt a coiled-coil conformation. Ser-206 bears the Phosphoserine mark. A helical; Anchor for type IV membrane protein membrane pass occupies residues 219-239 (GLSARLLALVVLFFIVGVIIG).

It belongs to the VAMP-associated protein (VAP) (TC 9.B.17) family. In terms of assembly, homodimer, and heterodimer with VAPA. Interacts with VAMP1 and VAMP2. Interacts (via MSP domain) with ZFYVE27. Interacts with RMDN3. Interacts with KIF5A in a ZFYVE27-dependent manner. Interacts (via MSP domain) with STARD3 (via phospho-FFAT motif). Interacts with STARD3NL (via FFAT motif). Interacts with CERT1. Interacts with PLEKHA3 and SACM1L to form a ternary complex. Interacts with VPS13A (via FFAT motif). Interacts with RB1CC1 (via phosphorylated FFAT motif), MIGA2 (via phosphorylated FFAT motif), RMDN3 (via phosphorylated FFAT motif), OSBPL1A (via FFAT motif), KCNB1 (via phosphorylated FFAT motif) and KCNB2 (via phosphorylated FFAT motif). Interacts (via MSP domain) with WDR44 (via FFAT motif); the interactions connect the endoplasmic reticulum (ER) with the endosomal tubule.

The protein resides in the endoplasmic reticulum membrane. In terms of biological role, endoplasmic reticulum (ER)-anchored protein that mediates the formation of contact sites between the ER and endosomes via interaction with FFAT motif-containing proteins such as STARD3 or WDR44. Interacts with STARD3 in a FFAT motif phosphorylation dependent manner. Via interaction with WDR44 participates in neosynthesized protein export. Participates in the endoplasmic reticulum unfolded protein response (UPR) by inducing ERN1/IRE1 activity. Involved in cellular calcium homeostasis regulation. The sequence is that of Vesicle-associated membrane protein-associated protein B from Mus musculus (Mouse).